The sequence spans 263 residues: Oncostatin-M (263 aa).

Residues 1 to 24 form the signal peptide; sequence MQTRLLRTLLSLTLSLLILSMALA. 2 disulfide bridges follow: Cys28–Cys139 and Cys71–Cys177. Residues Asn30, Asn44, and Asn145 are each glycosylated (N-linked (GlcNAc...) asparagine). A propeptide spanning residues 207–263 is cleaved from the precursor; sequence QSPLRARRKGTRRIRVRHKGTRRIRVRRKGTRRIWVRRKGSRKIRPSRSTQSPTTRA. Residues 241-252 are compositionally biased toward basic residues; sequence WVRRKGSRKIRP. The interval 241–263 is disordered; it reads WVRRKGSRKIRPSRSTQSPTTRA. Residues 253-263 are compositionally biased toward polar residues; that stretch reads SRSTQSPTTRA.

This sequence belongs to the LIF/OSM family. Post-translationally, propeptide processing is not important for receptor binding activity but may be important growth-inhibitory activity.

Its subcellular location is the secreted. Functionally, growth regulator. Inhibits the proliferation of a number of tumor cell lines. It regulates cytokine production, including IL-6, G-CSF and GM-CSF from endothelial cells. Uses only type II OSM receptor (heterodimers composed of OSMR and IL6ST). Involved in the maturation of fetal hepatocytes, thereby promoting liver development and regeneration. This is Oncostatin-M (Osm) from Mus musculus (Mouse).